A 468-amino-acid polypeptide reads, in one-letter code: Hydroxymethylglutaryl-CoA synthase B (468 aa).

The Proton donor/acceptor role is filled by Glu85. Cys119 acts as the Acyl-thioester intermediate in catalysis. (3S)-3-hydroxy-3-methylglutaryl-CoA-binding residues include Cys119, Thr161, Ser211, His250, Lys259, Asn327, and Ser359. Residue His250 is the Proton donor/acceptor of the active site.

The protein belongs to the thiolase-like superfamily. HMG-CoA synthase family.

The enzyme catalyses acetoacetyl-CoA + acetyl-CoA + H2O = (3S)-3-hydroxy-3-methylglutaryl-CoA + CoA + H(+). It participates in metabolic intermediate biosynthesis; (R)-mevalonate biosynthesis; (R)-mevalonate from acetyl-CoA: step 2/3. Functionally, condenses acetyl-CoA with acetoacetyl-CoA to form HMG-CoA, which is the substrate for HMG-CoA reductase. This chain is Hydroxymethylglutaryl-CoA synthase B (hgsB), found in Dictyostelium discoideum (Social amoeba).